Reading from the N-terminus, the 75-residue chain is uncharacterized protein (75 aa).

The protein localises to the plastid. It localises to the chloroplast. This is an uncharacterized protein from Calycanthus floridus var. glaucus (Eastern sweetshrub).